Here is a 300-residue protein sequence, read N- to C-terminus: 2-keto-3-deoxy-L-fuconate dehydrogenase (300 aa).

NAD(+)-binding positions include 63-90 (LITAAGAGIGRESALACARAGAHVIATD) and Asp112. Substrate is bound at residue Arg198. The Proton acceptor role is filled by Tyr201. NAD(+) contacts are provided by residues Lys205 and 234-238 (IKTPS). 2 residues coordinate substrate: Arg242 and Arg260.

The protein belongs to the short-chain dehydrogenases/reductases (SDR) family.

In terms of biological role, plays a role in the catabolism of L-fucose. Catalyzes the NAD(+)-dependent oxidation of 2-keo-3-deoxy-L-fuconate to 2,4-diketo-3-deoxy-L-fuconate. This chain is 2-keto-3-deoxy-L-fuconate dehydrogenase, found in Xanthomonas campestris pv. campestris (strain ATCC 33913 / DSM 3586 / NCPPB 528 / LMG 568 / P 25).